A 139-amino-acid polypeptide reads, in one-letter code: D-ribose pyranase (139 aa).

The Proton donor role is filled by His20. Residues Asp28, His106, and 128–130 (YAN) each bind substrate.

This sequence belongs to the RbsD / FucU family. RbsD subfamily. In terms of assembly, homodecamer.

The protein resides in the cytoplasm. The catalysed reaction is beta-D-ribopyranose = beta-D-ribofuranose. It participates in carbohydrate metabolism; D-ribose degradation; D-ribose 5-phosphate from beta-D-ribopyranose: step 1/2. Functionally, catalyzes the interconversion of beta-pyran and beta-furan forms of D-ribose. In Citrobacter koseri (strain ATCC BAA-895 / CDC 4225-83 / SGSC4696), this protein is D-ribose pyranase.